A 929-amino-acid chain; its full sequence is Valine--tRNA ligase (929 aa).

Residues 40–50 (PNVTGHLHMGH) carry the 'HIGH' region motif. A 'KMSKS' region motif is present at residues 522–526 (KMSKS). K525 is an ATP binding site. Residues 855 to 926 (LAGLIDKEAE…LEQQHAEITD (72 aa)) are a coiled coil.

It belongs to the class-I aminoacyl-tRNA synthetase family. ValS type 1 subfamily. In terms of assembly, monomer.

It is found in the cytoplasm. It carries out the reaction tRNA(Val) + L-valine + ATP = L-valyl-tRNA(Val) + AMP + diphosphate. Functionally, catalyzes the attachment of valine to tRNA(Val). As ValRS can inadvertently accommodate and process structurally similar amino acids such as threonine, to avoid such errors, it has a 'posttransfer' editing activity that hydrolyzes mischarged Thr-tRNA(Val) in a tRNA-dependent manner. The polypeptide is Valine--tRNA ligase (Nitrosococcus oceani (strain ATCC 19707 / BCRC 17464 / JCM 30415 / NCIMB 11848 / C-107)).